A 197-amino-acid polypeptide reads, in one-letter code: Holliday junction branch migration complex subunit RuvA (197 aa).

The segment at methionine 1 to arginine 63 is domain I. Residues serine 64–valine 142 are domain II. Residues alanine 143–serine 147 are flexible linker. A domain III region spans residues alanine 148–lysine 197.

This sequence belongs to the RuvA family. As to quaternary structure, homotetramer. Forms an RuvA(8)-RuvB(12)-Holliday junction (HJ) complex. HJ DNA is sandwiched between 2 RuvA tetramers; dsDNA enters through RuvA and exits via RuvB. An RuvB hexamer assembles on each DNA strand where it exits the tetramer. Each RuvB hexamer is contacted by two RuvA subunits (via domain III) on 2 adjacent RuvB subunits; this complex drives branch migration. In the full resolvosome a probable DNA-RuvA(4)-RuvB(12)-RuvC(2) complex forms which resolves the HJ.

The protein resides in the cytoplasm. Functionally, the RuvA-RuvB-RuvC complex processes Holliday junction (HJ) DNA during genetic recombination and DNA repair, while the RuvA-RuvB complex plays an important role in the rescue of blocked DNA replication forks via replication fork reversal (RFR). RuvA specifically binds to HJ cruciform DNA, conferring on it an open structure. The RuvB hexamer acts as an ATP-dependent pump, pulling dsDNA into and through the RuvAB complex. HJ branch migration allows RuvC to scan DNA until it finds its consensus sequence, where it cleaves and resolves the cruciform DNA. This Streptococcus pneumoniae serotype 19F (strain G54) protein is Holliday junction branch migration complex subunit RuvA.